Here is a 152-residue protein sequence, read N- to C-terminus: Globin-1 subunit beta (152 aa).

Residue S2 is modified to N-acetylserine. Residues 12 to 152 (VSNADQKDLL…SLVAVVQAAL (141 aa)) form the Globin domain. Heme b-binding residues include H72 and H104.

Belongs to the globin family. Heterotetramer of two alpha chains and two beta chains.

The chain is Globin-1 subunit beta from Anadara trapezia (Sydney cockle).